A 399-amino-acid polypeptide reads, in one-letter code: MIQEKHLTFTINLLVSLFFLTILIIPKGYNYAPIILSAIGLIYFIPLKKKLSFSSEDKKLIFSFLFYFFTFLLSIIINKDGIREIDNPSRLLLFIPLLLLFKNFPIKRKTILYAIPSSALITGCVALFQKFALGYEKPFPETMHIQMGNIAISLATFSIVITLHFFIKKQYKSTLFGFVAIILAIMTSALSGARGGWIGLPVVVGIILFLYKEFINKKLIITLIAIITIGLTALITSPKFGIEKRYNAAKSDIVSYLEKNNRNTSLGARFDMWENALIAIKEAPIFGHGSDGYDEFRHKQVKSKQMAKTTLNFGSLHNQYLESWVKRGLVGFIALILIILTPIFYFIKNLNTHNLETKCICILGIIHIVSHIFYFTSQSFLAHNSGNIFYFSAMLCFIV.

The next 10 helical transmembrane spans lie at 6-26, 27-47, 60-80, 111-131, 147-167, 173-193, 195-215, 220-240, 328-348, and 362-382; these read HLTF…LIIP, KGYN…FIPL, LIFS…INKD, ILYA…FQKF, MGNI…HFFI, STLF…LSGA, GGWI…KEFI, IITL…SPKF, GLVG…YFIK, and ILGI…SFLA.

It localises to the cell membrane. This is an uncharacterized protein from Haemophilus influenzae (strain ATCC 51907 / DSM 11121 / KW20 / Rd).